A 503-amino-acid polypeptide reads, in one-letter code: Opine oxidase subunit A (503 aa).

The protein to T-protein and to dimethylglycine dehydrogenase. Heterodimer of a subunit A and a subunit B.

The protein operates within opine metabolism; octopine degradation. Functionally, oxidative cleavage of octopine into L-arginine and pyruvate. The sequence is that of Opine oxidase subunit A (ooxA) from Agrobacterium tumefaciens (strain Ach5).